A 178-amino-acid chain; its full sequence is Bifunctional protein PyrR (178 aa).

The PRPP-binding signature appears at valine 99–threonine 111.

It belongs to the purine/pyrimidine phosphoribosyltransferase family. PyrR subfamily.

It carries out the reaction UMP + diphosphate = 5-phospho-alpha-D-ribose 1-diphosphate + uracil. Functionally, regulates the transcription of the pyrimidine nucleotide (pyr) operon in response to exogenous pyrimidines. Its function is as follows. Also displays a weak uracil phosphoribosyltransferase activity which is not physiologically significant. In Nostoc punctiforme (strain ATCC 29133 / PCC 73102), this protein is Bifunctional protein PyrR.